Here is a 416-residue protein sequence, read N- to C-terminus: Queuine tRNA-ribosyltransferase accessory subunit 2 (416 aa).

Zn(2+) is bound by residues Cys323, Cys325, Cys328, and His354.

The protein belongs to the queuine tRNA-ribosyltransferase family. QTRT2 subfamily. In terms of assembly, heterodimer of a catalytic subunit and an accessory subunit. Zn(2+) is required as a cofactor.

It localises to the cytoplasm. Non-catalytic subunit of the queuine tRNA-ribosyltransferase (TGT) that catalyzes the base-exchange of a guanine (G) residue with queuine (Q) at position 34 (anticodon wobble position) in tRNAs with GU(N) anticodons (tRNA-Asp, -Asn, -His and -Tyr), resulting in the hypermodified nucleoside queuosine (7-(((4,5-cis-dihydroxy-2-cyclopenten-1-yl)amino)methyl)-7-deazaguanosine). The polypeptide is Queuine tRNA-ribosyltransferase accessory subunit 2 (Drosophila mojavensis (Fruit fly)).